A 476-amino-acid chain; its full sequence is Calcitonin gene-related peptide type 1 receptor (476 aa).

Residues 1 to 33 (METLQMGLLSRSALFKYIIIFLIMINTRGYVLA) form the signal peptide. Residues 34–154 (SQEQEAKTSV…FTHEKVKTAL (121 aa)) lie on the Extracellular side of the membrane. 3 cysteine pairs are disulfide-bonded: C63–C89, C80–C120, and C103–C142. N81, N133, and N138 each carry an N-linked (GlcNAc...) asparagine glycan. The helical transmembrane segment at 155–179 (NLYYLTIIGHGLSIASLLISLGIFF) threads the bilayer. Over 180–190 (YFKNLSCQRIT) the chain is Cytoplasmic. The helical transmembrane segment at 191 to 213 (LHKNLFFSFVCNSIITIISLSAV) threads the bilayer. Topologically, residues 214-224 (ANNQALVATNP) are extracellular. Residues 225 to 253 (VICKISQFIHLYLMGCNYFWMLCEGIYLH) form a helical membrane-spanning segment. Topologically, residues 254–267 (TLIVVAVFAEKQHL) are cytoplasmic. Residues 268-288 (MWYYLLGWGFPLIPACIHAVA) traverse the membrane as a helical segment. Over 289-304 (RSLYYNDNCWISSETH) the chain is Extracellular. A helical transmembrane segment spans residues 305 to 329 (LLYIIHGPICAALLVNLFFLLNIVR). Residues 330–344 (VLITKLKVTHQAESN) lie on the Cytoplasmic side of the membrane. A helical membrane pass occupies residues 345-366 (LYMKAVRATLILVPLLGIEFVL). Over 367–381 (FPWKPEGRIAEEIYD) the chain is Extracellular. Residues 382–402 (YVMHILMHYQGLLVATIFCFF) form a helical membrane-spanning segment. At 403 to 476 (NGEVQAVLKR…VFFKTEKQYM (74 aa)) the chain is on the cytoplasmic side.

Belongs to the G-protein coupled receptor 2 family.

It is found in the cell membrane. In terms of biological role, may function as G protein-coupled receptor for calcitonin-gene-related peptides and adrenomedullin. Specificity may be modulated by accessory proteins. May activate cAMP-dependent pathway. The polypeptide is Calcitonin gene-related peptide type 1 receptor (calcrl) (Xenopus laevis (African clawed frog)).